Consider the following 373-residue polypeptide: UDP-glucose 4-epimerase 3 (373 aa).

27–58 is a binding site for NAD(+); it reads SVLVTGGAGYIGTHTVLRLLEKGFAVTVVDNF. Residue S153 coordinates substrate. Y177 (proton acceptor) is an active-site residue.

This sequence belongs to the NAD(P)-dependent epimerase/dehydratase family. The cofactor is NAD(+).

It catalyses the reaction UDP-alpha-D-glucose = UDP-alpha-D-galactose. The protein operates within carbohydrate metabolism; galactose metabolism. Its function is as follows. Catalyzes the interconversion between UDP-glucose and UDP-galactose. The sequence is that of UDP-glucose 4-epimerase 3 (UGE-3) from Oryza sativa subsp. japonica (Rice).